The following is an 842-amino-acid chain: Glucans biosynthesis glucosyltransferase H (842 aa).

Transmembrane regions (helical) follow at residues 140-160, 194-214, 513-533, 568-588, 600-620, 622-642, 656-676, and 680-700; these read ILLL…KTIL, ILIL…TALM, VFLT…FLAL, IALF…SIIL, FIRV…LAPV, MLFH…VWNS, FMRH…MAWL, and FLFW…VSAI.

Belongs to the glycosyltransferase 2 family. OpgH subfamily.

It is found in the cell inner membrane. It functions in the pathway glycan metabolism; osmoregulated periplasmic glucan (OPG) biosynthesis. In terms of biological role, involved in the biosynthesis of osmoregulated periplasmic glucans (OPGs). This Klebsiella pneumoniae (strain 342) protein is Glucans biosynthesis glucosyltransferase H.